The primary structure comprises 227 residues: Cytochrome c oxidase subunit 2 (227 aa).

At 1 to 14 (MAYPFQLGLQDATS) the chain is on the mitochondrial intermembrane side. The helical transmembrane segment at 15–45 (PIMEELLHFHDHTLMIVFLISSLVLYIISLM) threads the bilayer. The Mitochondrial matrix portion of the chain corresponds to 46 to 59 (LTTKLTHTSTMDAQ). A helical transmembrane segment spans residues 60-87 (EVETVWTILPAIILILIALPSLRILYMM). Residues 88-227 (DEINNPSLTV…YFETWSALMV (140 aa)) are Mitochondrial intermembrane-facing. His-161, Cys-196, Glu-198, Cys-200, His-204, and Met-207 together coordinate Cu cation. Glu-198 is a Mg(2+) binding site. Position 218 is a phosphotyrosine (Tyr-218).

The protein belongs to the cytochrome c oxidase subunit 2 family. In terms of assembly, component of the cytochrome c oxidase (complex IV, CIV), a multisubunit enzyme composed of 14 subunits. The complex is composed of a catalytic core of 3 subunits MT-CO1, MT-CO2 and MT-CO3, encoded in the mitochondrial DNA, and 11 supernumerary subunits COX4I, COX5A, COX5B, COX6A, COX6B, COX6C, COX7A, COX7B, COX7C, COX8 and NDUFA4, which are encoded in the nuclear genome. The complex exists as a monomer or a dimer and forms supercomplexes (SCs) in the inner mitochondrial membrane with NADH-ubiquinone oxidoreductase (complex I, CI) and ubiquinol-cytochrome c oxidoreductase (cytochrome b-c1 complex, complex III, CIII), resulting in different assemblies (supercomplex SCI(1)III(2)IV(1) and megacomplex MCI(2)III(2)IV(2)). Found in a complex with TMEM177, COA6, COX18, COX20, SCO1 and SCO2. Interacts with TMEM177 in a COX20-dependent manner. Interacts with COX20. Interacts with COX16. Cu cation is required as a cofactor.

The protein resides in the mitochondrion inner membrane. It carries out the reaction 4 Fe(II)-[cytochrome c] + O2 + 8 H(+)(in) = 4 Fe(III)-[cytochrome c] + 2 H2O + 4 H(+)(out). Functionally, component of the cytochrome c oxidase, the last enzyme in the mitochondrial electron transport chain which drives oxidative phosphorylation. The respiratory chain contains 3 multisubunit complexes succinate dehydrogenase (complex II, CII), ubiquinol-cytochrome c oxidoreductase (cytochrome b-c1 complex, complex III, CIII) and cytochrome c oxidase (complex IV, CIV), that cooperate to transfer electrons derived from NADH and succinate to molecular oxygen, creating an electrochemical gradient over the inner membrane that drives transmembrane transport and the ATP synthase. Cytochrome c oxidase is the component of the respiratory chain that catalyzes the reduction of oxygen to water. Electrons originating from reduced cytochrome c in the intermembrane space (IMS) are transferred via the dinuclear copper A center (CU(A)) of subunit 2 and heme A of subunit 1 to the active site in subunit 1, a binuclear center (BNC) formed by heme A3 and copper B (CU(B)). The BNC reduces molecular oxygen to 2 water molecules using 4 electrons from cytochrome c in the IMS and 4 protons from the mitochondrial matrix. The sequence is that of Cytochrome c oxidase subunit 2 (MT-CO2) from Canis lupus familiaris (Dog).